Consider the following 251-residue polypeptide: Probable transcriptional regulatory protein MMAR_2098 (251 aa).

The protein belongs to the TACO1 family.

It is found in the cytoplasm. The sequence is that of Probable transcriptional regulatory protein MMAR_2098 from Mycobacterium marinum (strain ATCC BAA-535 / M).